Reading from the N-terminus, the 393-residue chain is NAD(P)H-quinone oxidoreductase subunit H, chloroplastic (393 aa).

The protein belongs to the complex I 49 kDa subunit family. NDH is composed of at least 16 different subunits, 5 of which are encoded in the nucleus.

The protein resides in the plastid. The protein localises to the chloroplast thylakoid membrane. The enzyme catalyses a plastoquinone + NADH + (n+1) H(+)(in) = a plastoquinol + NAD(+) + n H(+)(out). It catalyses the reaction a plastoquinone + NADPH + (n+1) H(+)(in) = a plastoquinol + NADP(+) + n H(+)(out). Functionally, NDH shuttles electrons from NAD(P)H:plastoquinone, via FMN and iron-sulfur (Fe-S) centers, to quinones in the photosynthetic chain and possibly in a chloroplast respiratory chain. The immediate electron acceptor for the enzyme in this species is believed to be plastoquinone. Couples the redox reaction to proton translocation, and thus conserves the redox energy in a proton gradient. The chain is NAD(P)H-quinone oxidoreductase subunit H, chloroplastic from Lotus japonicus (Lotus corniculatus var. japonicus).